A 475-amino-acid polypeptide reads, in one-letter code: Ribulose bisphosphate carboxylase large chain (475 aa).

Residues 1 to 2 (MS) constitute a propeptide that is removed on maturation. At proline 3 the chain carries N-acetylproline. Lysine 14 bears the N6,N6,N6-trimethyllysine mark. Asparagine 123 and threonine 173 together coordinate substrate. The active-site Proton acceptor is lysine 175. A substrate-binding site is contributed by lysine 177. Residues lysine 201, aspartate 203, and glutamate 204 each contribute to the Mg(2+) site. An N6-carboxylysine modification is found at lysine 201. Histidine 294 (proton acceptor) is an active-site residue. Positions 295, 327, and 379 each coordinate substrate.

Belongs to the RuBisCO large chain family. Type I subfamily. Heterohexadecamer of 8 large chains and 8 small chains; disulfide-linked. The disulfide link is formed within the large subunit homodimers. Mg(2+) serves as cofactor. Post-translationally, the disulfide bond which can form in the large chain dimeric partners within the hexadecamer appears to be associated with oxidative stress and protein turnover.

It is found in the plastid. The protein resides in the chloroplast. The catalysed reaction is 2 (2R)-3-phosphoglycerate + 2 H(+) = D-ribulose 1,5-bisphosphate + CO2 + H2O. It carries out the reaction D-ribulose 1,5-bisphosphate + O2 = 2-phosphoglycolate + (2R)-3-phosphoglycerate + 2 H(+). Its function is as follows. RuBisCO catalyzes two reactions: the carboxylation of D-ribulose 1,5-bisphosphate, the primary event in carbon dioxide fixation, as well as the oxidative fragmentation of the pentose substrate in the photorespiration process. Both reactions occur simultaneously and in competition at the same active site. This is Ribulose bisphosphate carboxylase large chain from Pinus koraiensis (Korean pine).